The sequence spans 301 residues: Recombination-associated protein RdgC (301 aa).

It belongs to the RdgC family.

The protein localises to the cytoplasm. Its subcellular location is the nucleoid. Functionally, may be involved in recombination. The protein is Recombination-associated protein RdgC of Xanthomonas axonopodis pv. citri (strain 306).